A 354-amino-acid polypeptide reads, in one-letter code: S-adenosylmethionine:tRNA ribosyltransferase-isomerase (354 aa).

Belongs to the QueA family. As to quaternary structure, monomer.

The protein localises to the cytoplasm. The enzyme catalyses 7-aminomethyl-7-carbaguanosine(34) in tRNA + S-adenosyl-L-methionine = epoxyqueuosine(34) in tRNA + adenine + L-methionine + 2 H(+). It functions in the pathway tRNA modification; tRNA-queuosine biosynthesis. Its function is as follows. Transfers and isomerizes the ribose moiety from AdoMet to the 7-aminomethyl group of 7-deazaguanine (preQ1-tRNA) to give epoxyqueuosine (oQ-tRNA). This chain is S-adenosylmethionine:tRNA ribosyltransferase-isomerase, found in Salmonella typhi.